The chain runs to 270 residues: uncharacterized protein (270 aa).

This is an uncharacterized protein from Escherichia coli (strain K12).